The sequence spans 1359 residues: MPYSLTEKKRIRKDFSKLHSILKTPFLLTIQIGSFLDFLQMDVPPGKRKDKGLHAAFKSVFPIKSYTEYAELQYSSYHLGVPSFEVKECQVRGLTYAAPLRVKLRLVIYDKESPASEQVVKDVKEQEVYMGEIPLMTPKGNFVINGTERVIVSQLHRSPGVIFEHDKGKTHSSGKLLFSARIIPYRGSWLDFEFDPKDCVYARIDRRRKLLATILLRALGYSTEEILIMFFETISVKRQGSSYLLDLVPQRLRGESLPFDIASPDGEVIVEAGRRVTARHIKQMEKAGMKTLPAPKEFLIGKTLARDLIDAGTGEVLAKANDEITAELMTALEDANIQAFDLIYTNDLDRGSFISDSLRLDPTTTPLEAQMEIYRVMRPGEPPTKEAAQNLFQNLFFNPERYDLSPVGRMKFNRRLGKEDITGPSILSKEDIVDVIKTLVDIRNGYGSVDDVDHLGNRRVRSVGEMAENQFRVGLVRVERAVRERLSLAESEGLMPQELINAKPVSAAVKEFFGSSQLSQFMDQNNPLSEVTHKRRVSALGPGGLTRERAGFEVRDVHPTHYGRVCPIETPEGPNIGLINSLAVYARINQYGFIETPYRKVVDGKVAGEVDYLSAIEEGQYVIAQANAAADEEGRLIDMLVSCRHKNEFTLLPPEKVQYIDVSPKQIVSVAASLIPFLEHDDANRALMGSNMQRQAVPTLRAETPLVGTGMEQVVARDSGVMVVARRGGIVDSVDAARVVVRVNDEETASDEPGVDIYNLIKYARSNQNTCINQSPLVKPGDTVAIGDVLADGPSTDMGELALGQNLLVAFMPWNGYNFEDSILISERVVEEDRFTSIHIEELTCFARDTKLGPEEISSDIPNVSEAALSKLDEAGIVYIGAEVKPGDILVGKVTPKGETQLTPEEKLLRAIFGEKASDVKDTSLRVSSGMQGTVIDVQVFTRDGVEKDTRALEIEEMELAKIKKDLRDEFRIVETDIYQRLEKVLVGKTVEGGPAELKAGTQITQNYLADLPRERWFEIRLRSEEAGRQLESVAGQLKEQRVAMDEKFQQQRAKLTSGHDLPPGVQKMVKVYLAVKRRVQPGDKMAGRHGNKGVISTIVPIEDMPYMEDGTPVDIVLNPLGVPSRMNIGQILETHLGWAAKGLGRKIGALLESGEQASELRVFLDRIYNASGKKEDLNSLSDEEVLELANNLKDGVPMATPVFDGASEQEIKTMLELADLPTNGQTNLYDGRSGEAFARPVTVGYMHMLKLNHLVDDKMHARSTGPYSLVTQQPLGGKAQFGGQRFGEMEVWALESYGAAYTLQEMLTVKSDDVNGRTKMYKNIVDGDYRMEAGMPESFNVLTKEIRALGIDIELEQD.

This sequence belongs to the RNA polymerase beta chain family. In terms of assembly, the RNAP catalytic core consists of 2 alpha, 1 beta, 1 beta' and 1 omega subunit. When a sigma factor is associated with the core the holoenzyme is formed, which can initiate transcription.

The enzyme catalyses RNA(n) + a ribonucleoside 5'-triphosphate = RNA(n+1) + diphosphate. In terms of biological role, DNA-dependent RNA polymerase catalyzes the transcription of DNA into RNA using the four ribonucleoside triphosphates as substrates. This chain is DNA-directed RNA polymerase subunit beta, found in Nitrosococcus oceani (strain ATCC 19707 / BCRC 17464 / JCM 30415 / NCIMB 11848 / C-107).